Reading from the N-terminus, the 210-residue chain is Redox-sensing transcriptional repressor Rex (210 aa).

The segment at residues 16–55 is a DNA-binding region (H-T-H motif); the sequence is IYSRFLKRLDKKGITTVSSGDIAEGVGVSPAQVRKDLAYF. Residue 90 to 95 coordinates NAD(+); it reads GAGNLG.

The protein belongs to the transcriptional regulatory Rex family. In terms of assembly, homodimer.

The protein localises to the cytoplasm. Modulates transcription in response to changes in cellular NADH/NAD(+) redox state. The sequence is that of Redox-sensing transcriptional repressor Rex from Desulforamulus reducens (strain ATCC BAA-1160 / DSM 100696 / MI-1) (Desulfotomaculum reducens).